Here is a 426-residue protein sequence, read N- to C-terminus: Probable serine/threonine-protein kinase PBL2 (426 aa).

Residues 1 to 54 (MGNCLDSSAKVDNSNHSPHANSASSGSKVSSKTSRSTGPSGLSTTSYSTDSSFG) form a disordered region. A lipid anchor (N-myristoyl glycine) is attached at Gly2. Cys4 carries the S-palmitoyl cysteine lipid modification. The segment covering 14-38 (SNHSPHANSASSGSKVSSKTSRSTG) has biased composition (low complexity). Over residues 39-52 (PSGLSTTSYSTDSS) the composition is skewed to polar residues. Thr75 carries the post-translational modification Phosphothreonine. In terms of domain architecture, Protein kinase spans 86-369 (FRQDNLLGEG…SEVLVTLEQL (284 aa)). Residues 92–100 (LGEGGFGCV) and Lys124 contribute to the ATP site. Tyr169 is modified (phosphotyrosine). Asp219 functions as the Proton acceptor in the catalytic mechanism. Ser253 is subject to O-UMP-serine. Ser253 is subject to Phosphoserine. Thr254 and Thr259 each carry phosphothreonine. Thr254 carries the O-UMP-threonine modification. The residue at position 267 (Tyr267) is a Phosphotyrosine. Residues 374–426 (KPGTKHTQMESPRFHHSSVMQKSPVRYSHDRPLLHMTPGASPLPSYTQSPRVR) are disordered. The segment covering 417-426 (PSYTQSPRVR) has biased composition (polar residues).

It belongs to the protein kinase superfamily. Ser/Thr protein kinase family. Interacts with FLS2. Interacts with the Xanthomonas campestris effector XopAC/AvrAC; the recognition of X.campestris effector XopAC/AvrAC requires the presence of RKS1 and RPP13L4/ZAR1. Component of a stable high-order oligomeric complex made of RKS1 and RPP13L4/ZAR1 which recruits X.campestris effector XopAC/AvrAC-mediated uridylylated PBL2 in the presence of ATP to form a wheel-like pentameric resistosome; this complex triggers immunity toward X.campestris in vascular tissues. Binds to RKS1 when uridylylated. In terms of processing, uridylylated at Ser-253 and Thr-254 by Xanthomonas campestris effector AvrAC/XopAC; this uridylylation is necessary for specific recruitment to RKS1 and to trigger immunity. In terms of tissue distribution, strongly expressed in leaves, moderately in roots, and barely in flowers, mostly in pedicels.

It is found in the cell membrane. Its subcellular location is the nucleus. It carries out the reaction L-seryl-[protein] + ATP = O-phospho-L-seryl-[protein] + ADP + H(+). The enzyme catalyses L-threonyl-[protein] + ATP = O-phospho-L-threonyl-[protein] + ADP + H(+). Involved in disease resistance signaling. Contributes to pathogen-associated molecular pattern (PAMP)-triggered immunity (PTI) signaling and defense responses downstream of FLS2. Acts as a BIK1 decoy and enables Xanthomonas campestris AvrAC/XopAC detection; X.campestris effector AvrAC/XopAC-mediated uridylylation promotes the formation of a complex with RKS1 and RPP13L4/ZAR1 which, in turn, activates effector-triggered immunity (ETI) against X.campestris. Promotes, when uridylylated by AvrAC/XopAC, the release of ADP from the inactive RKS1-ZAR1 complex, thus activating the resistosome. The sequence is that of Probable serine/threonine-protein kinase PBL2 from Arabidopsis thaliana (Mouse-ear cress).